Here is a 578-residue protein sequence, read N- to C-terminus: MLQDWCRRMGVNAERSLLILDIPDDCEEHEFQEAVRAALSPLGRYRVLIKVFRKELGARAALVEFAEGLNQSLIPRQIAGKGGPWKVISLPQALDAEFQDIPSFPAQPQGQAVARGAGEAGAAGEAGSVGEAGGVNEERSAGEDEAGGIGEAGGVGEAGAAGEAGAAGEAGAAGEAGGAGEAGGAGEAGGAGEEGGTGEEGGAGEAGGAGEEGGEDEAGAAGEAVGAGVVEAWTQSWRQTLRPLVKTMAYRELRPFSGREQPGCVEESFESWLEDAKDMLQLWCHASERERRRRLLDSLDGLALDIVSGLLEEDPDFSAQDCLTALGQVFRSRDTWMTSRMKFLTCTQGPQEGLFAFVVRLEGLLQKAVEKGAVHPAMANHLRLRQVLSRARPSEALQDTLRRMQLERRPPDFLRLLRLIRDMEAWAASLARSQQGVAWAAAPVESEDPAAAQASPAQGDASEADPGAEDADEAASTTKEAARVAPATGEDENAPAGLEGLGQGRSPDAPGGLPARMGSAVDMAPGGPSWEPEGLVQVGGQEAEEPPQEGLKPILEESENEDEDGAGEAGKPKSPPGK.

Disordered regions lie at residues 106 to 221 (AQPQ…AGAA) and 441 to 578 (AAPV…PPGK). Residues 112-129 (AVARGAGEAGAAGEAGSV) show a composition bias toward low complexity. A compositionally biased stretch (gly residues) spans 147 to 159 (GGIGEAGGVGEAG). Low complexity predominate over residues 160–173 (AAGEAGAAGEAGAA). Residues 174–211 (GEAGGAGEAGGAGEAGGAGEEGGTGEEGGAGEAGGAGE) are compositionally biased toward gly residues. Over residues 449–461 (PAAAQASPAQGDA) the composition is skewed to low complexity. Composition is skewed to acidic residues over residues 462-473 (SEADPGAEDADE) and 556-566 (EESENEDEDGA).

The sequence is that of Paraneoplastic antigen Ma6F from Homo sapiens (Human).